We begin with the raw amino-acid sequence, 635 residues long: Phosphatidylserine decarboxylase proenzyme 3 (635 aa).

The interval 1 to 42 is disordered; the sequence is MGNGNSTETKESRRSKMRKKIQNFRSRRRLSRPGSGSVSGLA. A lipid anchor (N-myristoyl glycine) is attached at G2. The span at 15–31 shows a compositional bias: basic residues; the sequence is SKMRKKIQNFRSRRRLS. In terms of domain architecture, C2 spans 22-147; it reads QNFRSRRRLS…VVQEPDSTCK (126 aa). EF-hand domains lie at 180 to 210 and 211 to 246; these read AKRILSIVDYDEDGKLSFSEFSDLMNAFGNV and VAANKKEELFKAADLNGDGVVTIDELAALLAVQQEQ. Ca(2+)-binding residues include D188, D190, D192, K194, E199, D224, N226, D228, and E235. Active-site charge relay system; for autoendoproteolytic cleavage activity residues include D442, H498, and S586. S586 (schiff-base intermediate with substrate; via pyruvic acid; for decarboxylase activity) is an active-site residue. Pyruvic acid (Ser); by autocatalysis is present on S586.

The protein belongs to the phosphatidylserine decarboxylase family. PSD-B subfamily. Eukaryotic type II sub-subfamily. Heterodimer of a large membrane-associated beta subunit and a small pyruvoyl-containing alpha subunit. The cofactor is pyruvate. Is synthesized initially as an inactive proenzyme. Formation of the active enzyme involves a self-maturation process in which the active site pyruvoyl group is generated from an internal serine residue via an autocatalytic post-translational modification. Two non-identical subunits are generated from the proenzyme in this reaction, and the pyruvate is formed at the N-terminus of the alpha chain, which is derived from the carboxyl end of the proenzyme. The autoendoproteolytic cleavage occurs by a canonical serine protease mechanism, in which the side chain hydroxyl group of the serine supplies its oxygen atom to form the C-terminus of the beta chain, while the remainder of the serine residue undergoes an oxidative deamination to produce ammonia and the pyruvoyl prosthetic group on the alpha chain. During this reaction, the Ser that is part of the protease active site of the proenzyme becomes the pyruvoyl prosthetic group, which constitutes an essential element of the active site of the mature decarboxylase. In terms of tissue distribution, expressed in roots, leaves, stems and flowers.

The protein localises to the endoplasmic reticulum membrane. It carries out the reaction a 1,2-diacyl-sn-glycero-3-phospho-L-serine + H(+) = a 1,2-diacyl-sn-glycero-3-phosphoethanolamine + CO2. It functions in the pathway phospholipid metabolism; phosphatidylethanolamine biosynthesis; phosphatidylethanolamine from CDP-diacylglycerol: step 2/2. In terms of biological role, catalyzes the formation of phosphatidylethanolamine (PtdEtn) from phosphatidylserine (PtdSer). Plays a central role in phospholipid metabolism and in the interorganelle trafficking of phosphatidylserine. Contributes only to a minor proportion of PtdEtn production. In Arabidopsis thaliana (Mouse-ear cress), this protein is Phosphatidylserine decarboxylase proenzyme 3 (PSD3).